We begin with the raw amino-acid sequence, 84 residues long: Putative membrane protein insertion efficiency factor (84 aa).

The protein belongs to the UPF0161 family.

The protein localises to the cell inner membrane. Functionally, could be involved in insertion of integral membrane proteins into the membrane. In Shewanella frigidimarina (strain NCIMB 400), this protein is Putative membrane protein insertion efficiency factor.